The chain runs to 451 residues: 3-phosphoshikimate 1-carboxyvinyltransferase (451 aa).

3-phosphoshikimate-binding residues include Lys-30, Ser-31, and Arg-35. A phosphoenolpyruvate-binding site is contributed by Lys-30. Positions 103 and 131 each coordinate phosphoenolpyruvate. Ser-176, Gln-178, Asp-329, and Lys-356 together coordinate 3-phosphoshikimate. Residue Gln-178 participates in phosphoenolpyruvate binding. The active-site Proton acceptor is the Asp-329. Arg-360 and Arg-404 together coordinate phosphoenolpyruvate.

This sequence belongs to the EPSP synthase family. Monomer.

It is found in the cytoplasm. It carries out the reaction 3-phosphoshikimate + phosphoenolpyruvate = 5-O-(1-carboxyvinyl)-3-phosphoshikimate + phosphate. Its pathway is metabolic intermediate biosynthesis; chorismate biosynthesis; chorismate from D-erythrose 4-phosphate and phosphoenolpyruvate: step 6/7. Functionally, catalyzes the transfer of the enolpyruvyl moiety of phosphoenolpyruvate (PEP) to the 5-hydroxyl of shikimate-3-phosphate (S3P) to produce enolpyruvyl shikimate-3-phosphate and inorganic phosphate. This chain is 3-phosphoshikimate 1-carboxyvinyltransferase, found in Parvibaculum lavamentivorans (strain DS-1 / DSM 13023 / NCIMB 13966).